The sequence spans 216 residues: uncharacterized protein (216 aa).

S-adenosyl-L-methionine-binding residues include Gly56 and Glu77.

This sequence belongs to the methyltransferase superfamily. YrrT family.

Could be a S-adenosyl-L-methionine-dependent methyltransferase. This is an uncharacterized protein from Alkaliphilus oremlandii (strain OhILAs) (Clostridium oremlandii (strain OhILAs)).